Here is a 242-residue protein sequence, read N- to C-terminus: Aspartate/glutamate leucyltransferase (242 aa).

This sequence belongs to the R-transferase family. Bpt subfamily.

The protein resides in the cytoplasm. It carries out the reaction N-terminal L-glutamyl-[protein] + L-leucyl-tRNA(Leu) = N-terminal L-leucyl-L-glutamyl-[protein] + tRNA(Leu) + H(+). The enzyme catalyses N-terminal L-aspartyl-[protein] + L-leucyl-tRNA(Leu) = N-terminal L-leucyl-L-aspartyl-[protein] + tRNA(Leu) + H(+). Functionally, functions in the N-end rule pathway of protein degradation where it conjugates Leu from its aminoacyl-tRNA to the N-termini of proteins containing an N-terminal aspartate or glutamate. The chain is Aspartate/glutamate leucyltransferase from Alcanivorax borkumensis (strain ATCC 700651 / DSM 11573 / NCIMB 13689 / SK2).